Consider the following 280-residue polypeptide: Large ribosomal subunit protein uL2 (280 aa).

2 disordered regions span residues 29 to 58 (PEKS…GGGH) and 225 to 280 (VMNP…NKKR). Residues 45-58 (SHGHITTRHRGGGH) are compositionally biased toward basic residues. The span at 253–269 (KEGRTRKPKRYSDDMIV) shows a compositional bias: basic and acidic residues. Residues 270–280 (RRRRANKNKKR) are compositionally biased toward basic residues.

This sequence belongs to the universal ribosomal protein uL2 family. In terms of assembly, part of the 50S ribosomal subunit. Forms a bridge to the 30S subunit in the 70S ribosome.

Its function is as follows. One of the primary rRNA binding proteins. Required for association of the 30S and 50S subunits to form the 70S ribosome, for tRNA binding and peptide bond formation. It has been suggested to have peptidyltransferase activity; this is somewhat controversial. Makes several contacts with the 16S rRNA in the 70S ribosome. The protein is Large ribosomal subunit protein uL2 of Corynebacterium glutamicum (strain R).